A 293-amino-acid polypeptide reads, in one-letter code: Epimerase family protein SDR39U1 (293 aa).

NADP(+) is bound by residues 31 to 32, 58 to 59, E77, R82, and V160; these read SR and LA.

It belongs to the NAD(P)-dependent epimerase/dehydratase family. SDR39U1 subfamily.

Putative NADP-dependent oxidoreductase. The chain is Epimerase family protein SDR39U1 (Sdr39u1) from Mus musculus (Mouse).